A 975-amino-acid polypeptide reads, in one-letter code: Probable dipeptidyl-aminopeptidase B (975 aa).

The span at 1–20 (MAEHGHNMWEEEPSKGRDSL) shows a compositional bias: basic and acidic residues. The interval 1–111 (MAEHGHNMWE…LSAASGSAGK (111 aa)) is disordered. The Cytoplasmic segment spans residues 1–125 (MAEHGHNMWE…YRMMDRGLRR (125 aa)). The segment covering 22–31 (SDSSASTTSL) has biased composition (low complexity). Residues 68–84 (LDDEDPLKDEASGDYDL) are compositionally biased toward acidic residues. A helical; Signal-anchor for type II membrane protein membrane pass occupies residues 126–146 (VLIIASLVFVTAWVGGLFIYI). Residues 147 to 975 (SHKSYLHGSE…IDNAKPQGKR (829 aa)) are Vacuolar-facing. Residues asparagine 207, asparagine 397, and asparagine 622 are each glycosylated (N-linked (GlcNAc...) asparagine). Catalysis depends on serine 826, which acts as the Charge relay system. N-linked (GlcNAc...) asparagine glycosylation occurs at asparagine 885. Residues aspartate 903 and histidine 936 each act as charge relay system in the active site.

It belongs to the peptidase S9B family.

Its subcellular location is the vacuole membrane. The enzyme catalyses Release of an N-terminal dipeptide, Xaa-Yaa-|-Zaa-, from a polypeptide, preferentially when Yaa is Pro, provided Zaa is neither Pro nor hydroxyproline.. In terms of biological role, type IV dipeptidyl-peptidase which removes N-terminal dipeptides sequentially from polypeptides having unsubstituted N-termini provided that the penultimate residue is proline. The protein is Probable dipeptidyl-aminopeptidase B (DAPB) of Grosmannia clavigera (strain kw1407 / UAMH 11150) (Blue stain fungus).